Here is a 283-residue protein sequence, read N- to C-terminus: Probable protein phosphatase 2C 17 (283 aa).

In terms of domain architecture, PPM-type phosphatase spans 32 to 282; the sequence is KYGFSLIKGK…DDISCIVVRF (251 aa). Mn(2+) is bound by residues Asp-69, Gly-70, Asp-234, and Asp-273.

Belongs to the PP2C family. It depends on Mg(2+) as a cofactor. Mn(2+) serves as cofactor.

It catalyses the reaction O-phospho-L-seryl-[protein] + H2O = L-seryl-[protein] + phosphate. The enzyme catalyses O-phospho-L-threonyl-[protein] + H2O = L-threonyl-[protein] + phosphate. In Arabidopsis thaliana (Mouse-ear cress), this protein is Probable protein phosphatase 2C 17.